Here is a 346-residue protein sequence, read N- to C-terminus: [LysW]-lysine/[LysW]-ornithine hydrolase (346 aa).

Zn(2+) is bound at residue His68. The active site involves Asp70. Asp92 serves as a coordination point for Zn(2+). The active-site Proton acceptor is the Glu122. Residues Glu123, Glu146, and His317 each coordinate Zn(2+).

The protein belongs to the peptidase M20A family. LysK subfamily. The cofactor is Zn(2+). Requires Co(2+) as cofactor.

It localises to the cytoplasm. It carries out the reaction [amino-group carrier protein]-C-terminal-gamma-(L-lysyl)-L-glutamate + H2O = [amino-group carrier protein]-C-terminal-L-glutamate + L-lysine. The enzyme catalyses [amino-group carrier protein]-C-terminal-gamma-(L-ornithyl)-L-glutamate + H2O = [amino-group carrier protein]-C-terminal-L-glutamate + L-ornithine. It participates in amino-acid biosynthesis; L-lysine biosynthesis via AAA pathway; L-lysine from L-alpha-aminoadipate (Thermus route): step 5/5. It functions in the pathway amino-acid biosynthesis; L-arginine biosynthesis. Functionally, catalyzes the release of L-lysine from [LysW]-gamma-L-lysine and the release of L-ornithine from [LysW]-L-ornithine. This chain is [LysW]-lysine/[LysW]-ornithine hydrolase, found in Saccharolobus islandicus (strain M.16.27) (Sulfolobus islandicus).